Consider the following 182-residue polypeptide: Putative manganese efflux pump MntP 1 (182 aa).

6 helical membrane passes run 4-24 (LLLLSLALSMDAFAVSLGLGA), 42-62 (IFQGIMPLLGFFVGVTFIAFI), 63-83 (SAFDHYLAFGILALIGAKMIY), 103-123 (LILSIATSIDALAAGVSLHLI), 127-147 (VFLSCTIIAFTTFLLSYLGVL), and 162-182 (ILGGVILIGIGSKILLEHLFF).

This sequence belongs to the MntP (TC 9.B.29) family.

Its subcellular location is the cell inner membrane. In terms of biological role, probably functions as a manganese efflux pump. The protein is Putative manganese efflux pump MntP 1 of Wolinella succinogenes (strain ATCC 29543 / DSM 1740 / CCUG 13145 / JCM 31913 / LMG 7466 / NCTC 11488 / FDC 602W) (Vibrio succinogenes).